The sequence spans 340 residues: tRNA N6-adenosine threonylcarbamoyltransferase (340 aa).

Positions 111 and 115 each coordinate Fe cation. Substrate contacts are provided by residues 134–138, aspartate 167, glycine 180, and asparagine 276; that span reads LVSGG. Fe cation is bound at residue aspartate 304.

This sequence belongs to the KAE1 / TsaD family. The cofactor is Fe(2+).

It localises to the cytoplasm. The catalysed reaction is L-threonylcarbamoyladenylate + adenosine(37) in tRNA = N(6)-L-threonylcarbamoyladenosine(37) in tRNA + AMP + H(+). Functionally, required for the formation of a threonylcarbamoyl group on adenosine at position 37 (t(6)A37) in tRNAs that read codons beginning with adenine. Is involved in the transfer of the threonylcarbamoyl moiety of threonylcarbamoyl-AMP (TC-AMP) to the N6 group of A37, together with TsaE and TsaB. TsaD likely plays a direct catalytic role in this reaction. This Helicobacter pylori (strain G27) protein is tRNA N6-adenosine threonylcarbamoyltransferase.